The chain runs to 450 residues: Phosphoglucosamine mutase 2 (450 aa).

Catalysis depends on Ser101, which acts as the Phosphoserine intermediate. Ser101, Asp245, Asp247, and Asp249 together coordinate Mg(2+). The residue at position 101 (Ser101) is a Phosphoserine.

This sequence belongs to the phosphohexose mutase family. Mg(2+) serves as cofactor. Post-translationally, activated by phosphorylation.

It carries out the reaction alpha-D-glucosamine 1-phosphate = D-glucosamine 6-phosphate. Its function is as follows. Catalyzes the conversion of glucosamine-6-phosphate to glucosamine-1-phosphate. The protein is Phosphoglucosamine mutase 2 of Shewanella sp. (strain MR-4).